We begin with the raw amino-acid sequence, 1241 residues long: MMENWPKKPEGSQWTDDQWKAVVANGRDILVAAAAGSGKTAVLVERIIKKIINEENPVDVDRLLVVTFTNAAAQEMKNRIGEALEKVLIDEPGSQHIRKQLSLLNKASISTIHSFCLQVIRGYYYMLDVDPRFRIANQTENELLKEEVLDDILEEEYGIEDNTIFFELVDRYTSDRSDDDLQRMILALHTESRAHPNPEKWLDKLVEAYDVEGKTIEDLVYASYLLEDVKFQLETAEQHIRKATELAMLPDGPAPRVETLQADLALLGTLSSAARESWTSVYEAMQNVSWQTLKRIKKSDYNEDIVKQVDSLRNKAKDEVKKLQEELFSRKPESFLRDFQDMHPVLEKLVQLVKVFTERFQAMKRDKGMVDFTDLEHFCLQILSEQSENGEMKPSAVALQYRNKFAEVLVDEYQDTNFVQESIIKFVTKDSESEGNLFMVGDVKQSIYRFRLAEPGLFLGKYKRFTQEGLGGGMKIDLAKNFRSRHEVLAGTNFIFKQIMGEEVGEIDYDADAELKLGASYPEGEDVAAELLCIQQTEEEVIDGEEGAEVEKAQLEARLMAQRIKAMVDSGYEVYDRKTDSMRPVQYRDFVILLRSMPWAPQIMEELKLQGIPVYADLATGYFEATEVNIMMNVFRVIDNPMQDIPLAAVLRSPIVGLNDEELATLRAHGKKGSFYEVMSSFLKGAPLEEEKELHDKLEWFYNLLQGWREFARQQSLSDLIWKVYGETGYYDFVGGLPAGKQRQANLRVLYDRARQYEATSFRGLFRFLRFIERILERGDDMGTARALGEQEDVVRIMTIHKSKGLEFPVVFVAGLGRRFNTQDLMKRFLLHKDFGFGSQFIDPRKRIKYTTLSQLAIKRKMKMELIAEEMRVLYVALTRAKEKLILIGTVKDANKEMEKWLDAREHSEWLLPDHIRAGASCYLDWIAPSLYRHRDSEILLELGQGSIPDEIYGYDTSWKVEVVDGNTLLAPEPVQEEKQELLEALREKKAVPLQSERKEEVYDRLMWKYGYEEATSHRAKQSVTEIKRNYQSEEGSDNAFIKKLRAPIQTRPRFMEKKGLTYAERGTAVHAVMQHVDLKKPITEEVIREQIAGMVNKELLTFEQAEEIAIEKVISFFDSDLGKRVLAAKSVEREVPFTMMLAAEEAYQDWQGKSGESILVQGVIDCMIEEEDGITLIDFKTDTIAGKFPGGFDQAKPILEERYKVQLSLYAKALEKSLQHPVKEKCLYFFDGNHVVKIEE.

Residues 12 to 485 (SQWTDDQWKA…IDLAKNFRSR (474 aa)) enclose the UvrD-like helicase ATP-binding domain. 33-40 (AAAGSGKT) provides a ligand contact to ATP. The UvrD-like helicase C-terminal domain occupies 505 to 805 (GEIDYDADAE…RIMTIHKSKG (301 aa)).

The protein belongs to the helicase family. AddA subfamily. Heterodimer of AddA and AddB/RexB. Requires Mg(2+) as cofactor.

The enzyme catalyses Couples ATP hydrolysis with the unwinding of duplex DNA by translocating in the 3'-5' direction.. The catalysed reaction is ATP + H2O = ADP + phosphate + H(+). Functionally, the heterodimer acts as both an ATP-dependent DNA helicase and an ATP-dependent, dual-direction single-stranded exonuclease. Recognizes the chi site generating a DNA molecule suitable for the initiation of homologous recombination. The AddA nuclease domain is required for chi fragment generation; this subunit has the helicase and 3' -&gt; 5' nuclease activities. This is ATP-dependent helicase/nuclease subunit A from Bacillus cereus (strain ATCC 10987 / NRS 248).